A 301-amino-acid polypeptide reads, in one-letter code: Sulfate adenylyltransferase subunit 2 (301 aa).

The segment at 279 to 301 (RQGRLIDRDEAGSMEKKKREGYF) is disordered.

Belongs to the PAPS reductase family. CysD subfamily. Sulfate-activating enzymes, NodP and NodQ, may be physically associated.

It carries out the reaction sulfate + ATP + H(+) = adenosine 5'-phosphosulfate + diphosphate. Functionally, proposed to provide activated sulfate for transfer to nod factor. This Rhizobium sp. (strain N33) protein is Sulfate adenylyltransferase subunit 2 (nodP).